The sequence spans 239 residues: MQYQNQDNFPERIEYLVDKLNGPSEFARKTGVTLSTITRWRKGEADPSRSNLVKIAEVTGVSIEWLATGKIKEEKTTEEKPAGSLVSRAFERMQAMLEEGVSMIDSYSSINVSAGFGSFNEGITQPDGQEPYSDELLTSLGVKADNCAVFWANGNSMLPTINNYDQMLVDLSRKEIQGDRIYLVQNGESVWVKRVKMEWDGISLISDNKEEYPPISITGENAQNLQIIGQVVHIGHSLI.

Positions 13–66 constitute an HTH cro/C1-type domain; it reads IEYLVDKLNGPSEFARKTGVTLSTITRWRKGEADPSRSNLVKIAEVTGVSIEWL. The segment at residues 24-43 is a DNA-binding region (H-T-H motif); the sequence is SEFARKTGVTLSTITRWRKG.

This is an uncharacterized protein from Haemophilus influenzae (strain ATCC 51907 / DSM 11121 / KW20 / Rd).